The sequence spans 829 residues: Colorectal mutant cancer protein (829 aa).

Disordered stretches follow at residues 114-139, 282-320, and 672-700; these read RSEL…TSVS, TRLQ…SSND, and EEQK…CADA. Residues 123 to 132 show a composition bias toward basic and acidic residues; sequence EVNEDSRSMD. Over residues 285–312 the composition is skewed to polar residues; that stretch reads QSVQATGPSSPGRLTSTNRPINPSTGEL. Residues 689–698 show a composition bias toward basic and acidic residues; the sequence is SKDKPGKECA. The short motif at 766 to 782 is the Nuclear localization signal element; sequence KRANSNLVAAYEKAKKK. The PDZ-binding motif lies at 826–829; sequence ETSL. At Ser828 the chain carries Phosphoserine.

Belongs to the MCC family. Interacts with SCRIB (via phosphorylated PDZ-binding motif), EZR, SNX27, NHERF1 and NHERF2. Interacts with CTNNB1; the interaction is enhanced upon Wnt stimulation. Interacts with MYH10. Interacts with CCAR2. Expressed in a variety of tissues.

Its subcellular location is the cell membrane. It is found in the cell projection. The protein localises to the lamellipodium. It localises to the nucleus. The protein resides in the cytoplasm. Its function is as follows. Candidate for the putative colorectal tumor suppressor gene located at 5q21. Suppresses cell proliferation and the Wnt/b-catenin pathway in colorectal cancer cells. Inhibits DNA binding of b-catenin/TCF/LEF transcription factors. Involved in cell migration independently of RAC1, CDC42 and p21-activated kinase (PAK) activation. Represses the beta-catenin pathway (canonical Wnt signaling pathway) in a CCAR2-dependent manner by sequestering CCAR2 to the cytoplasm, thereby impairing its ability to inhibit SIRT1 which is involved in the deacetylation and negative regulation of beta-catenin (CTNB1) transcriptional activity. In Homo sapiens (Human), this protein is Colorectal mutant cancer protein (MCC).